Consider the following 229-residue polypeptide: ABC transporter I family member 1 (229 aa).

The ABC transporter domain maps to 11 to 228 (LLLQNVSCMR…LIDMLDRADI (218 aa)). 43–50 (GTNGSGKS) is a binding site for ATP.

It belongs to the ABC transporter superfamily. ABCI family.

The protein resides in the membrane. The catalysed reaction is heme b(in) + ATP + H2O = heme b(out) + ADP + phosphate + H(+). In terms of biological role, part of the ABC transporter complex CcmAB involved in the biogenesis of c-type cytochromes; once thought to export heme, this seems not to be the case, but its exact role is uncertain. Responsible for energy coupling to the transport system. The polypeptide is ABC transporter I family member 1 (ABCI1) (Arabidopsis thaliana (Mouse-ear cress)).